A 232-amino-acid polypeptide reads, in one-letter code: Ovalbumin-related protein X (232 aa).

Belongs to the serpin family. Ov-serpin subfamily. Expressed in egg white (at protein level).

This Gallus gallus (Chicken) protein is Ovalbumin-related protein X (SERPINB14C).